The sequence spans 363 residues: MSKNYHIAVLPGDGIGPEVMTQALKVLDAVRNRFAMRITTSHYDVGGAAIDNHGQPLPPATVEGCEQADAVLFGSVGGPKWEHLPPDQQPERGALLPLRKHFKLFSNLRPAKLYQGLEAFCPLRADIAANGFDILCVRELTGGIYFGQPKGREGSGQYEKAFDTEVYHRFEIERIARIAFESARKRRHKVTSIDKANVLQSSILWREIVNEIATEYPDVELAHMYIDNATMQLIKDPSQFDVLLCSNLFGDILSDECAMITGSMGMLPSASLNEQGFGLYEPAGGSAPDITGKNIANPIAQILSLALLLRYSLDADDAACAIERAINRALEEGIRTGDLARGAAAVSTDEMGDIIARYVAEGV.

NAD(+) is bound at residue glycine 78–glutamate 91. Residues arginine 99, arginine 109, arginine 138, and aspartate 227 each contribute to the substrate site. Mg(2+) contacts are provided by aspartate 227, aspartate 251, and aspartate 255. Glycine 285–asparagine 297 lines the NAD(+) pocket.

The protein belongs to the isocitrate and isopropylmalate dehydrogenases family. LeuB type 1 subfamily. In terms of assembly, homodimer. It depends on Mg(2+) as a cofactor. The cofactor is Mn(2+).

It is found in the cytoplasm. It carries out the reaction (2R,3S)-3-isopropylmalate + NAD(+) = 4-methyl-2-oxopentanoate + CO2 + NADH. It participates in amino-acid biosynthesis; L-leucine biosynthesis; L-leucine from 3-methyl-2-oxobutanoate: step 3/4. Functionally, catalyzes the oxidation of 3-carboxy-2-hydroxy-4-methylpentanoate (3-isopropylmalate) to 3-carboxy-4-methyl-2-oxopentanoate. The product decarboxylates to 4-methyl-2 oxopentanoate. This is 3-isopropylmalate dehydrogenase from Shigella boydii serotype 4 (strain Sb227).